Reading from the N-terminus, the 693-residue chain is Ion-translocating oxidoreductase complex subunit C (693 aa).

4Fe-4S ferredoxin-type domains are found at residues 368-397 (MEPV…QQLY) and 407-436 (KARD…VQYY). [4Fe-4S] cluster is bound by residues Cys-377, Cys-380, Cys-383, Cys-387, Cys-416, Cys-419, Cys-422, and Cys-426. A compositionally biased stretch (basic and acidic residues) spans 539–548 (REERVREKQS). The tract at residues 539 to 564 (REERVREKQSQQETPATEVTPEELDP) is disordered.

It belongs to the 4Fe4S bacterial-type ferredoxin family. RnfC subfamily. As to quaternary structure, the complex is composed of six subunits: RnfA, RnfB, RnfC, RnfD, RnfE and RnfG. It depends on [4Fe-4S] cluster as a cofactor.

Its subcellular location is the cell inner membrane. Functionally, part of a membrane-bound complex that couples electron transfer with translocation of ions across the membrane. This Pectobacterium atrosepticum (strain SCRI 1043 / ATCC BAA-672) (Erwinia carotovora subsp. atroseptica) protein is Ion-translocating oxidoreductase complex subunit C.